The chain runs to 347 residues: N-acetyl-gamma-glutamyl-phosphate reductase (347 aa).

Cys-152 is a catalytic residue.

Belongs to the NAGSA dehydrogenase family. Type 1 subfamily.

The protein resides in the cytoplasm. It carries out the reaction N-acetyl-L-glutamate 5-semialdehyde + phosphate + NADP(+) = N-acetyl-L-glutamyl 5-phosphate + NADPH + H(+). Its pathway is amino-acid biosynthesis; L-arginine biosynthesis; N(2)-acetyl-L-ornithine from L-glutamate: step 3/4. Functionally, catalyzes the NADPH-dependent reduction of N-acetyl-5-glutamyl phosphate to yield N-acetyl-L-glutamate 5-semialdehyde. This Neisseria meningitidis serogroup A / serotype 4A (strain DSM 15465 / Z2491) protein is N-acetyl-gamma-glutamyl-phosphate reductase.